A 764-amino-acid chain; its full sequence is 5-methyltetrahydropteroyltriglutamate--homocysteine methyltransferase (764 aa).

5-methyltetrahydropteroyltri-L-glutamate is bound by residues 17–20 and lysine 117; that span reads RELK. L-homocysteine is bound by residues 436–438 and glutamate 489; that span reads IGS. Residues 436 to 438 and glutamate 489 contribute to the L-methionine site; that span reads IGS. Residues 520-521 and tryptophan 566 each bind 5-methyltetrahydropteroyltri-L-glutamate; that span reads RC. Aspartate 604 is a binding site for L-homocysteine. An L-methionine-binding site is contributed by aspartate 604. Glutamate 610 provides a ligand contact to 5-methyltetrahydropteroyltri-L-glutamate. Residues histidine 646, cysteine 648, and glutamate 670 each coordinate Zn(2+). Histidine 699 functions as the Proton donor in the catalytic mechanism. Position 731 (cysteine 731) interacts with Zn(2+).

It belongs to the vitamin-B12 independent methionine synthase family. Zn(2+) is required as a cofactor.

The enzyme catalyses 5-methyltetrahydropteroyltri-L-glutamate + L-homocysteine = tetrahydropteroyltri-L-glutamate + L-methionine. It participates in amino-acid biosynthesis; L-methionine biosynthesis via de novo pathway; L-methionine from L-homocysteine (MetE route): step 1/1. In terms of biological role, catalyzes the transfer of a methyl group from 5-methyltetrahydrofolate to homocysteine resulting in methionine formation. The chain is 5-methyltetrahydropteroyltriglutamate--homocysteine methyltransferase from Baumannia cicadellinicola subsp. Homalodisca coagulata.